The following is a 906-amino-acid chain: Protein translocase subunit SecA (906 aa).

ATP-binding positions include glutamine 86, 104-108, and aspartate 499; that span reads GEGKT. Residues 862 to 885 form a disordered region; it reads KPVVSRIDPKDRNPDDPTSWGRVS. Residues cysteine 890, cysteine 892, cysteine 901, and histidine 902 each coordinate Zn(2+).

Belongs to the SecA family. Monomer and homodimer. Part of the essential Sec protein translocation apparatus which comprises SecA, SecYEG and auxiliary proteins SecDF-YajC and YidC. The cofactor is Zn(2+).

It is found in the cell inner membrane. Its subcellular location is the cytoplasm. It carries out the reaction ATP + H2O + cellular proteinSide 1 = ADP + phosphate + cellular proteinSide 2.. Functionally, part of the Sec protein translocase complex. Interacts with the SecYEG preprotein conducting channel. Has a central role in coupling the hydrolysis of ATP to the transfer of proteins into and across the cell membrane, serving both as a receptor for the preprotein-SecB complex and as an ATP-driven molecular motor driving the stepwise translocation of polypeptide chains across the membrane. This is Protein translocase subunit SecA from Rickettsia massiliae (strain Mtu5).